Reading from the N-terminus, the 352-residue chain is Protein pelota homolog (352 aa).

This sequence belongs to the eukaryotic release factor 1 family. Pelota subfamily. As to quaternary structure, monomer. It depends on a divalent metal cation as a cofactor.

It is found in the cytoplasm. May function in recognizing stalled ribosomes, interact with stem-loop structures in stalled mRNA molecules, and effect endonucleolytic cleavage of the mRNA. May play a role in the release non-functional ribosomes and degradation of damaged mRNAs. Has endoribonuclease activity. This Thermofilum pendens (strain DSM 2475 / Hrk 5) protein is Protein pelota homolog.